Here is a 234-residue protein sequence, read N- to C-terminus: Large ribosomal subunit protein uL1c (234 aa).

This sequence belongs to the universal ribosomal protein uL1 family. As to quaternary structure, part of the 50S ribosomal subunit.

Its subcellular location is the plastid. It is found in the chloroplast. Functionally, binds directly to 23S rRNA. Might be involved in E site tRNA release (Potential). The protein is Large ribosomal subunit protein uL1c (rpl1) of Guillardia theta (Cryptophyte).